The chain runs to 162 residues: Protein NrdI (162 aa).

This sequence belongs to the NrdI family.

Its function is as follows. Probably involved in ribonucleotide reductase function. In Streptococcus pyogenes serotype M2 (strain MGAS10270), this protein is Protein NrdI.